Reading from the N-terminus, the 232-residue chain is Large ribosomal subunit protein uL1 (232 aa).

Belongs to the universal ribosomal protein uL1 family. Part of the 50S ribosomal subunit.

Functionally, binds directly to 23S rRNA. The L1 stalk is quite mobile in the ribosome, and is involved in E site tRNA release. Protein L1 is also a translational repressor protein, it controls the translation of the L11 operon by binding to its mRNA. The sequence is that of Large ribosomal subunit protein uL1 from Jannaschia sp. (strain CCS1).